A 323-amino-acid chain; its full sequence is tRNA dimethylallyltransferase (323 aa).

ATP is bound at residue 12-19; the sequence is GPTAAGKT. 14–19 serves as a coordination point for substrate; that stretch reads TAAGKT. Interaction with substrate tRNA stretches follow at residues 37 to 40 and 161 to 165; these read DSAL and QRLMR.

The protein belongs to the IPP transferase family. In terms of assembly, monomer. Mg(2+) serves as cofactor.

It catalyses the reaction adenosine(37) in tRNA + dimethylallyl diphosphate = N(6)-dimethylallyladenosine(37) in tRNA + diphosphate. Its function is as follows. Catalyzes the transfer of a dimethylallyl group onto the adenine at position 37 in tRNAs that read codons beginning with uridine, leading to the formation of N6-(dimethylallyl)adenosine (i(6)A). This is tRNA dimethylallyltransferase from Pseudomonas aeruginosa (strain UCBPP-PA14).